Consider the following 396-residue polypeptide: Transcription factor IIIB 50 kDa subunit (396 aa).

A TFIIB-type zinc finger spans residues 3 to 36; sequence GAKRCPDCGSSEIVEDAHYSQDQLVCADCGCILS. Residues Cys7, Cys10, Cys28, and Cys31 each coordinate Zn(2+). Copy 2 of the repeat occupies 173–249; that stretch reads VKSHCRSFKL…SRRLSCSLSR (77 aa). At Cys342 the chain carries Cysteine sulfenic acid (-SOH).

Belongs to the TFIIB family. Component of TFIIIB complexes. Interacts with TBP and forms a ternary complex with TBp and target DNA sequences. In response to oxidative stress, a Cys-residue is reversibly oxidized to cysteine sulfenic acid. This impairs formation of a ternary complex with TBP and DNA and down-regulates expression of target genes in response to oxidative stress.

It localises to the nucleus. General activator of RNA polymerase III transcription. Factor exclusively required for RNA polymerase III transcription of genes with promoter elements upstream of the initiation sites. Contributes to the regulation of gene expression; functions as activator in the absence of oxidative stress. Down-regulates expression of target genes in response to oxidative stress. Overexpression protects cells against apoptosis in response to oxidative stress. The protein is Transcription factor IIIB 50 kDa subunit (brf2) of Xenopus laevis (African clawed frog).